The chain runs to 177 residues: Large ribosomal subunit protein uL6 (177 aa).

The protein belongs to the universal ribosomal protein uL6 family. In terms of assembly, part of the 50S ribosomal subunit.

This protein binds to the 23S rRNA, and is important in its secondary structure. It is located near the subunit interface in the base of the L7/L12 stalk, and near the tRNA binding site of the peptidyltransferase center. This is Large ribosomal subunit protein uL6 from Shewanella baltica (strain OS223).